The primary structure comprises 136 residues: Cell division protein SepF 3 (136 aa).

Belongs to the SepF family. Homodimer. Interacts with FtsZ.

Its subcellular location is the cytoplasm. Cell division protein that is part of the divisome complex and is recruited early to the Z-ring. Probably stimulates Z-ring formation, perhaps through the cross-linking of FtsZ protofilaments. Its function overlaps with FtsA. This chain is Cell division protein SepF 3, found in Streptomyces coelicolor (strain ATCC BAA-471 / A3(2) / M145).